The primary structure comprises 71 residues: UPF0346 protein MGAS2096_Spy0401 (71 aa).

It belongs to the UPF0346 family.

This chain is UPF0346 protein MGAS2096_Spy0401, found in Streptococcus pyogenes serotype M12 (strain MGAS2096).